The sequence spans 302 residues: Tyrosine recombinase XerC (302 aa).

Residues 6–90 (DLEVTCLQDY…AIKQWGEFLL (85 aa)) enclose the Core-binding (CB) domain. Residues 111–290 (PLPKNMDVDS…DFQHLAKVYD (180 aa)) form the Tyr recombinase domain. Residues Arg150, Lys174, His242, Arg245, and His268 contribute to the active site. Tyr277 functions as the O-(3'-phospho-DNA)-tyrosine intermediate in the catalytic mechanism.

This sequence belongs to the 'phage' integrase family. XerC subfamily. In terms of assembly, forms a cyclic heterotetrameric complex composed of two molecules of XerC and two molecules of XerD.

The protein resides in the cytoplasm. In terms of biological role, site-specific tyrosine recombinase, which acts by catalyzing the cutting and rejoining of the recombining DNA molecules. The XerC-XerD complex is essential to convert dimers of the bacterial chromosome into monomers to permit their segregation at cell division. It also contributes to the segregational stability of plasmids. The protein is Tyrosine recombinase XerC of Shewanella putrefaciens (strain CN-32 / ATCC BAA-453).